A 291-amino-acid polypeptide reads, in one-letter code: 4-hydroxy-tetrahydrodipicolinate synthase (291 aa).

Thr-44 is a binding site for pyruvate. Tyr-132 functions as the Proton donor/acceptor in the catalytic mechanism. Lys-160 functions as the Schiff-base intermediate with substrate in the catalytic mechanism. Ile-202 is a binding site for pyruvate.

This sequence belongs to the DapA family. In terms of assembly, homotetramer; dimer of dimers.

The protein localises to the cytoplasm. The enzyme catalyses L-aspartate 4-semialdehyde + pyruvate = (2S,4S)-4-hydroxy-2,3,4,5-tetrahydrodipicolinate + H2O + H(+). Its pathway is amino-acid biosynthesis; L-lysine biosynthesis via DAP pathway; (S)-tetrahydrodipicolinate from L-aspartate: step 3/4. In terms of biological role, catalyzes the condensation of (S)-aspartate-beta-semialdehyde [(S)-ASA] and pyruvate to 4-hydroxy-tetrahydrodipicolinate (HTPA). The polypeptide is 4-hydroxy-tetrahydrodipicolinate synthase (Rhizorhabdus wittichii (strain DSM 6014 / CCUG 31198 / JCM 15750 / NBRC 105917 / EY 4224 / RW1) (Sphingomonas wittichii)).